A 218-amino-acid chain; its full sequence is Histone chaperone ASF1B (218 aa).

Belongs to the ASF1 family. In terms of assembly, interacts with histone H3 and histone H4. Interacts strongly with the N-terminus of TOUSLED. Post-translationally, phosphorylated in vitro by TOUSLED.

The protein resides in the nucleus. In terms of biological role, histone chaperone that facilitates histone deposition and histone exchange and removal during nucleosome assembly and disassembly. This is Histone chaperone ASF1B (ASF1B) from Arabidopsis thaliana (Mouse-ear cress).